Consider the following 475-residue polypeptide: Aspartyl/glutamyl-tRNA(Asn/Gln) amidotransferase subunit B (475 aa).

The protein belongs to the GatB/GatE family. GatB subfamily. As to quaternary structure, heterotrimer of A, B and C subunits.

It carries out the reaction L-glutamyl-tRNA(Gln) + L-glutamine + ATP + H2O = L-glutaminyl-tRNA(Gln) + L-glutamate + ADP + phosphate + H(+). The catalysed reaction is L-aspartyl-tRNA(Asn) + L-glutamine + ATP + H2O = L-asparaginyl-tRNA(Asn) + L-glutamate + ADP + phosphate + 2 H(+). In terms of biological role, allows the formation of correctly charged Asn-tRNA(Asn) or Gln-tRNA(Gln) through the transamidation of misacylated Asp-tRNA(Asn) or Glu-tRNA(Gln) in organisms which lack either or both of asparaginyl-tRNA or glutaminyl-tRNA synthetases. The reaction takes place in the presence of glutamine and ATP through an activated phospho-Asp-tRNA(Asn) or phospho-Glu-tRNA(Gln). This chain is Aspartyl/glutamyl-tRNA(Asn/Gln) amidotransferase subunit B, found in Staphylococcus haemolyticus (strain JCSC1435).